The chain runs to 347 residues: NADH-ubiquinone oxidoreductase chain 2 (347 aa).

10 helical membrane-spanning segments follow: residues 3 to 23 (PPIL…VLTS), 25 to 45 (HWLT…PILM), 60 to 80 (LLTQ…NLMF), 96 to 116 (AMVT…FWVP), 149 to 169 (IDPN…GWGG), 178 to 198 (ILAY…LYNP), 200 to 220 (MMLL…MLFM), 237 to 257 (APLI…LPPL), 274 to 294 (EMII…YFYM), and 323 to 343 (MILL…TPLL).

Belongs to the complex I subunit 2 family. Core subunit of respiratory chain NADH dehydrogenase (Complex I) which is composed of 45 different subunits. Interacts with TMEM242.

The protein resides in the mitochondrion inner membrane. It catalyses the reaction a ubiquinone + NADH + 5 H(+)(in) = a ubiquinol + NAD(+) + 4 H(+)(out). Core subunit of the mitochondrial membrane respiratory chain NADH dehydrogenase (Complex I) which catalyzes electron transfer from NADH through the respiratory chain, using ubiquinone as an electron acceptor. Essential for the catalytic activity and assembly of complex I. This chain is NADH-ubiquinone oxidoreductase chain 2, found in Mungos mungo (Banded mongoose).